Here is a 367-residue protein sequence, read N- to C-terminus: Chorismate synthase (367 aa).

Residue arginine 48 coordinates NADP(+). FMN-binding positions include 125–127 (RSS), 241–242 (NA), glycine 285, 300–304 (KPTSS), and arginine 326.

It belongs to the chorismate synthase family. In terms of assembly, homotetramer. FMNH2 is required as a cofactor.

The enzyme catalyses 5-O-(1-carboxyvinyl)-3-phosphoshikimate = chorismate + phosphate. The protein operates within metabolic intermediate biosynthesis; chorismate biosynthesis; chorismate from D-erythrose 4-phosphate and phosphoenolpyruvate: step 7/7. Its function is as follows. Catalyzes the anti-1,4-elimination of the C-3 phosphate and the C-6 proR hydrogen from 5-enolpyruvylshikimate-3-phosphate (EPSP) to yield chorismate, which is the branch point compound that serves as the starting substrate for the three terminal pathways of aromatic amino acid biosynthesis. This reaction introduces a second double bond into the aromatic ring system. The protein is Chorismate synthase of Dinoroseobacter shibae (strain DSM 16493 / NCIMB 14021 / DFL 12).